The sequence spans 679 residues: MTRRLLVTAALPYANGPIHIGHLVEYLQTDIWVRFQKLRGNRCLYICADDTHGTAIMIRARGEGRSEIELIEETSEAHQRDFAGFGIEFDHYGSTNSEENRTLCHQIWKSLRDADLVVERSVEQLYDPEAETFLADRFVRGTCPKCGTPNQAGDNCNCGHTYSPTELIDPVSTLSGATPIIKEAEHLFVELEKLHDFLSEWVSNSGALQPETANYLKGHFLADELRDWDISRPAPYFGFEIPDAPGNYWYVWFDAPIGYIASTQQWCDANGEDLADWWKSDDCEVHHFIGKDITYFHTLFWPGMLKTAGFSLPTKVHIHGFLNVNGKKMSKSDGTFVKAETFLKHIDPSALRYFYATKLSSRVEDLDLGVDEFVEKVNSDLVGKVVNLASRVGKFASRTGLAPSYPEDGGLFQAAAAKGDEIASAYEDGEFSKAMRLIMELADAANPFVEHAKPWEMNKAPERQDELRDVCTVALNLFRQLAVYLAPVLPELAKKCGDLLGEPITSWEQSQTPLVDRGVNKFQRMMDRVKTEDLEAMMEESKDEAAQETGAAATNPFNDSDQPLKDEPLADEITIDDFMKVDLRVARVLSAEHVPEANKLLKLTLGLGGDETRQVFAGIKAAYDPEKLVGRLVVMVANLKPRKMRFGLSEGMVTAAGPGGEEVFVLGIDEGALPGQRVH.

Positions 12 to 22 match the 'HIGH' region motif; it reads PYANGPIHIGH. Residues Cys143, Cys146, Cys156, and Cys158 each coordinate Zn(2+). Residues 328–332 carry the 'KMSKS' region motif; it reads KMSKS. Residue Lys331 coordinates ATP. The interval 537 to 564 is disordered; it reads MMEESKDEAAQETGAAATNPFNDSDQPL. In terms of domain architecture, tRNA-binding spans 577–679; the sequence is DFMKVDLRVA…EGALPGQRVH (103 aa).

The protein belongs to the class-I aminoacyl-tRNA synthetase family. MetG type 1 subfamily. As to quaternary structure, homodimer. It depends on Zn(2+) as a cofactor.

It localises to the cytoplasm. The catalysed reaction is tRNA(Met) + L-methionine + ATP = L-methionyl-tRNA(Met) + AMP + diphosphate. In terms of biological role, is required not only for elongation of protein synthesis but also for the initiation of all mRNA translation through initiator tRNA(fMet) aminoacylation. This is Methionine--tRNA ligase from Rhodopirellula baltica (strain DSM 10527 / NCIMB 13988 / SH1).